The sequence spans 360 residues: DNA replication and repair protein RecF (360 aa).

30-37 (GANGSGKT) contributes to the ATP binding site.

Belongs to the RecF family.

It localises to the cytoplasm. Its function is as follows. The RecF protein is involved in DNA metabolism; it is required for DNA replication and normal SOS inducibility. RecF binds preferentially to single-stranded, linear DNA. It also seems to bind ATP. The polypeptide is DNA replication and repair protein RecF (Acinetobacter baumannii (strain SDF)).